Reading from the N-terminus, the 87-residue chain is UPF0367 protein Syncc9902_0316 (87 aa).

This sequence belongs to the UPF0367 family.

This Synechococcus sp. (strain CC9902) protein is UPF0367 protein Syncc9902_0316.